Here is a 119-residue protein sequence, read N- to C-terminus: U-scoloptoxin(16)-Er11a (119 aa).

The signal sequence occupies residues 1–19; sequence MKSWTAAVLSLGLIYLSIS.

Belongs to the scoloptoxin-16 family. In terms of processing, contains 4 disulfide bonds. In terms of tissue distribution, expressed by the venom gland.

It is found in the secreted. The polypeptide is U-scoloptoxin(16)-Er11a (Ethmostigmus rubripes (Giant centipede)).